The following is a 191-amino-acid chain: Potassium-transporting ATPase KdpC subunit (191 aa).

A helical membrane pass occupies residues 11-31; the sequence is LFVLLTAVTGVVYPLAVTGIA.

The protein belongs to the KdpC family. As to quaternary structure, the system is composed of three essential subunits: KdpA, KdpB and KdpC.

The protein resides in the cell inner membrane. Its function is as follows. Part of the high-affinity ATP-driven potassium transport (or Kdp) system, which catalyzes the hydrolysis of ATP coupled with the electrogenic transport of potassium into the cytoplasm. This subunit acts as a catalytic chaperone that increases the ATP-binding affinity of the ATP-hydrolyzing subunit KdpB by the formation of a transient KdpB/KdpC/ATP ternary complex. In Dechloromonas aromatica (strain RCB), this protein is Potassium-transporting ATPase KdpC subunit.